A 788-amino-acid polypeptide reads, in one-letter code: Cap-specific mRNA (nucleoside-2'-O-)-methyltransferase 1 (788 aa).

The 47-residue stretch at 25 to 71 folds into the G-patch domain; the sequence is YSNKAMEMMKKMGYENDKGLGKSNQGRLEPIIAVQQDGRRGFGLKLD. Residues 143–147 and Arg-158 contribute to the substrate site; that span reads KTVFD. The region spanning 171–384 is the RrmJ-type SAM-dependent 2'-O-MTase domain; that stretch reads IFLNRAAVKM…ERYLVCKYKR (214 aa). Residue Asn-174 coordinates S-adenosyl-L-methionine. Lys-179 is an active-site residue. An S-adenosyl-L-methionine-binding site is contributed by 215-221; the sequence is CAGPGGF. Asp-298 is an active-site residue. A substrate-binding site is contributed by 308-310; it reads NIQ. Lys-338 functions as the Proton acceptor in the catalytic mechanism. Residue Asn-373 coordinates substrate.

Interacts (via C-terminus) with r2d2 (via C-terminus).

The protein resides in the nucleus. Its subcellular location is the cytoplasm. It catalyses the reaction a 5'-end (N(7)-methyl 5'-triphosphoguanosine)-ribonucleoside in mRNA + S-adenosyl-L-methionine = a 5'-end (N(7)-methyl 5'-triphosphoguanosine)-(2'-O-methyl-ribonucleoside) in mRNA + S-adenosyl-L-homocysteine + H(+). S-adenosyl-L-methionine-dependent methyltransferase that mediates mRNA cap1 2'-O-ribose methylation to the 5'-cap structure of mRNAs. Methylates the ribose of the first nucleotide of a m(7)GpppG-capped mRNA to produce m(7)GpppNmp (cap1). Positively regulates the Ago2-dependent small RNA pathway, with roles in both siRNA biogenesis and RISC assembly. Involved in facilitating conversion of pre-RISC into holo-RISC, possibly by promoting the unwinding of Ago2-bound siRNA duplexes and thus the retention of the guide strand in holo-RISC. In Drosophila melanogaster (Fruit fly), this protein is Cap-specific mRNA (nucleoside-2'-O-)-methyltransferase 1.